The primary structure comprises 210 residues: Thioredoxin-like 3-1, chloroplastic (210 aa).

The Thioredoxin domain occupies 81 to 210 (WRLKAFWSNI…EVRELINKFV (130 aa)). Active-site nucleophile residues include cysteine 130 and cysteine 133. Cysteine 130 and cysteine 133 are disulfide-bonded.

Belongs to the thioredoxin family.

It is found in the plastid. The protein resides in the chloroplast stroma. Its function is as follows. Probable thiol-disulfide oxidoreductase that may participate in various redox reactions. The protein is Thioredoxin-like 3-1, chloroplastic (WCRKC1) of Arabidopsis thaliana (Mouse-ear cress).